An 86-amino-acid chain; its full sequence is Small ribosomal subunit protein bS18 (86 aa).

Residues 1-20 form a disordered region; sequence MSREEGNNGRRPGGKMRRSR.

It belongs to the bacterial ribosomal protein bS18 family. As to quaternary structure, part of the 30S ribosomal subunit. Forms a tight heterodimer with protein bS6.

Binds as a heterodimer with protein bS6 to the central domain of the 16S rRNA, where it helps stabilize the platform of the 30S subunit. The sequence is that of Small ribosomal subunit protein bS18 from Clostridium beijerinckii (strain ATCC 51743 / NCIMB 8052) (Clostridium acetobutylicum).